The sequence spans 505 residues: N-succinylglutamate 5-semialdehyde dehydrogenase (505 aa).

234–239 is a binding site for NAD(+); sequence GSAHTG. Residues E257 and C291 contribute to the active site.

The protein belongs to the aldehyde dehydrogenase family. AstD subfamily.

It catalyses the reaction N-succinyl-L-glutamate 5-semialdehyde + NAD(+) + H2O = N-succinyl-L-glutamate + NADH + 2 H(+). Its pathway is amino-acid degradation; L-arginine degradation via AST pathway; L-glutamate and succinate from L-arginine: step 4/5. Functionally, catalyzes the NAD-dependent reduction of succinylglutamate semialdehyde into succinylglutamate. This is N-succinylglutamate 5-semialdehyde dehydrogenase from Yersinia pseudotuberculosis serotype IB (strain PB1/+).